Consider the following 961-residue polypeptide: Mitogen-activated protein kinase kinase kinase 13-B (961 aa).

A disordered region spans residues 89-115; that stretch reads RDQDEPENTAPQGSSHSGDGGNNSANE. Residues 101-114 are compositionally biased toward low complexity; that stretch reads GSSHSGDGGNNSAN. One can recognise a Protein kinase domain in the interval 171 to 412; the sequence is ISELQWLGSG…FRQILMHLDI (242 aa). ATP-binding positions include 177 to 185 and Lys-198; that span reads LGSGAQGAV. The active-site Proton acceptor is Asp-282. Leucine-zipper regions lie at residues 436–457 and 489–510; these read VKKHFEKIKSEGTCIHRLDEEL and LSSIMLQLEVREKELTRREQTV. A coiled-coil region spans residues 460–497; it reads RRREELRHALDIREHYERKLERANNLYMELSSIMLQLE. 3 disordered regions span residues 507–644, 796–874, and 933–961; these read EQTV…ETSQ, TPPA…DVAC, and NAESDCDSSEGECSDATVRTNNPVNSSTW. Positions 563–580 are enriched in low complexity; sequence AEGSAASASPISGSPKTS. Over residues 586–598 the composition is skewed to basic residues; the sequence is GRYRSKPRHRRGN. Low complexity predominate over residues 613–628; it reads QESPAPSQQSSQHQTP. The span at 813–826 shows a compositional bias: acidic residues; that stretch reads DSSEGEEGEVDSEV. The segment at 814–827 is acidic; that stretch reads SSEGEEGEVDSEVE. Over residues 839–854 the composition is skewed to polar residues; it reads STCQSYSTFSSENFSV. Acidic residues predominate over residues 934-945; the sequence is AESDCDSSEGEC. A compositionally biased stretch (polar residues) spans 949 to 961; sequence TVRTNNPVNSSTW.

Belongs to the protein kinase superfamily. Ser/Thr protein kinase family.

It localises to the cytoplasm. The protein resides in the membrane. It carries out the reaction L-seryl-[protein] + ATP = O-phospho-L-seryl-[protein] + ADP + H(+). The enzyme catalyses L-threonyl-[protein] + ATP = O-phospho-L-threonyl-[protein] + ADP + H(+). Functionally, may have a role in the JNK signaling pathway. The polypeptide is Mitogen-activated protein kinase kinase kinase 13-B (map3k13-b) (Xenopus laevis (African clawed frog)).